Consider the following 112-residue polypeptide: Mitochondrial import inner membrane translocase subunit TIM14-1 (112 aa).

Ala-2 bears the N-acetylalanine mark. Residues 7–23 (AGVAVAATALAGRYGIQ) traverse the membrane as a helical segment. The J domain maps to 53–112 (EAALILGVRESVAAEKVKEAHRKVMVANHPDAGGSHFLASKINEAKDVMLGKTKNSGSAF).

It belongs to the TIM14 family. As to quaternary structure, probable component of the PAM complex at least composed of a mitochondrial HSP70 protein, TIMM44 and TIMM14. The complex interacts with the TIMM23 component of the TIM17:23 complex.

The protein localises to the mitochondrion. It is found in the mitochondrion inner membrane. Functionally, component of the PAM complex, a complex required for the translocation of transit peptide-containing proteins from the inner membrane into the mitochondrial matrix in an ATP-dependent manner. This chain is Mitochondrial import inner membrane translocase subunit TIM14-1 (TIM14-1), found in Arabidopsis thaliana (Mouse-ear cress).